Consider the following 320-residue polypeptide: (+)-corvol ether B synthase/(+)-corvol ether A synthase ((2E,6E)-farnesyl diphosphate cyclizing) (320 aa).

2 residues coordinate Mg(2+): Asp-78 and Asp-83. Positions 78–83 match the DDXXXD motif motif; that stretch reads DDLFVD. Arg-171 provides a ligand contact to substrate. Mg(2+) is bound by residues Asn-217, Ser-221, and Glu-225.

The protein belongs to the terpene synthase family. Requires Mg(2+) as cofactor.

It carries out the reaction (2E,6E)-farnesyl diphosphate + H2O = (+)-corvol ether B + diphosphate. It catalyses the reaction (2E,6E)-farnesyl diphosphate + H2O = (+)-corvol ether A + diphosphate. It functions in the pathway secondary metabolite biosynthesis; terpenoid biosynthesis. In terms of biological role, catalyzes the conversion of (2E,6E)-farnesyl diphosphate (FPP) into (+)-corvol ether A and (+)-corvol ether B via a 1,10-cyclization, which requires isomerization of FPP to nerolidyl diphosphate (NPP) and then abstraction of the pyrophosphate from intermediate NPP leading to a (E,Z)-germacradienyl (helminthogermacradienyl) cation. The preferred substrate is (2E,6E)-farnesyl diphosphate (FPP), however geranyl diphosphate (GPP) is also able to produce small amounts of several acyclic and cyclic monoterpenes, with linalool as the main product. This Kitasatospora setae (strain ATCC 33774 / DSM 43861 / JCM 3304 / KCC A-0304 / NBRC 14216 / KM-6054) (Streptomyces setae) protein is (+)-corvol ether B synthase/(+)-corvol ether A synthase ((2E,6E)-farnesyl diphosphate cyclizing).